A 263-amino-acid chain; its full sequence is NADH dehydrogenase [ubiquinone] iron-sulfur protein 3, mitochondrial (263 aa).

The N-terminal 35 residues, 1 to 35 (MVAAVARLWWRGLLGASALTRGAGRPSVLLLPVRR), are a transit peptide targeting the mitochondrion.

The protein belongs to the complex I 30 kDa subunit family. Core subunit of respiratory chain NADH dehydrogenase (Complex I) which is composed of 45 different subunits. Interacts with NDUFAF3. Interacts with RAB5IF. Found in subcomplexes containing subunits NDUFS2, MT-ND1 and NDUFA13.

It localises to the mitochondrion inner membrane. The enzyme catalyses a ubiquinone + NADH + 5 H(+)(in) = a ubiquinol + NAD(+) + 4 H(+)(out). Functionally, core subunit of the mitochondrial membrane respiratory chain NADH dehydrogenase (Complex I) which catalyzes electron transfer from NADH through the respiratory chain, using ubiquinone as an electron acceptor. Essential for the catalytic activity and assembly of complex I. The protein is NADH dehydrogenase [ubiquinone] iron-sulfur protein 3, mitochondrial (NDUFS3) of Gorilla gorilla gorilla (Western lowland gorilla).